A 338-amino-acid chain; its full sequence is Lipoyl synthase (338 aa).

A disordered region spans residues 1 to 24 (MTTVQEAVPNLIPTQDATPRPAPK). 7 residues coordinate [4Fe-4S] cluster: C84, C89, C95, C110, C114, C117, and S324. In terms of domain architecture, Radical SAM core spans 96–313 (FSGGTATFMI…AEEGYKMGFK (218 aa)).

It belongs to the radical SAM superfamily. Lipoyl synthase family. [4Fe-4S] cluster is required as a cofactor.

The protein localises to the cytoplasm. It carries out the reaction [[Fe-S] cluster scaffold protein carrying a second [4Fe-4S](2+) cluster] + N(6)-octanoyl-L-lysyl-[protein] + 2 oxidized [2Fe-2S]-[ferredoxin] + 2 S-adenosyl-L-methionine + 4 H(+) = [[Fe-S] cluster scaffold protein] + N(6)-[(R)-dihydrolipoyl]-L-lysyl-[protein] + 4 Fe(3+) + 2 hydrogen sulfide + 2 5'-deoxyadenosine + 2 L-methionine + 2 reduced [2Fe-2S]-[ferredoxin]. It participates in protein modification; protein lipoylation via endogenous pathway; protein N(6)-(lipoyl)lysine from octanoyl-[acyl-carrier-protein]: step 2/2. Functionally, catalyzes the radical-mediated insertion of two sulfur atoms into the C-6 and C-8 positions of the octanoyl moiety bound to the lipoyl domains of lipoate-dependent enzymes, thereby converting the octanoylated domains into lipoylated derivatives. This Pseudomonas putida (strain ATCC 700007 / DSM 6899 / JCM 31910 / BCRC 17059 / LMG 24140 / F1) protein is Lipoyl synthase.